The primary structure comprises 148 residues: Snaclec stejaggregin-A subunit beta-3 (148 aa).

An N-terminal signal peptide occupies residues 1 to 23 (MGRFISVSFGLLVVFLSLSGAGA). A disulfide bond links cysteine 27 and cysteine 38. The C-type lectin domain maps to 34 to 145 (YDLYCYKVFK…CSRTHYVVCK (112 aa)). N-linked (GlcNAc...) asparagine glycosylation is found at asparagine 47 and asparagine 78. Disulfide bonds link cysteine 55/cysteine 144 and cysteine 121/cysteine 136.

It belongs to the snaclec family. In terms of assembly, heteromultimer; disulfide-linked. Expressed by the venom gland.

Its subcellular location is the secreted. In terms of biological role, interferes with one step of hemostasis (modulation of platelet aggregation, or coagulation cascade, for example). The sequence is that of Snaclec stejaggregin-A subunit beta-3 from Trimeresurus stejnegeri (Chinese green tree viper).